A 480-amino-acid chain; its full sequence is REST corepressor 1 (480 aa).

The disordered stretch occupies residues 1–105 (MPAMVEKGPE…GGGMRVGPQY (105 aa)). Composition is skewed to low complexity over residues 21 to 58 (AASA…AAAA) and 66 to 89 (SLAA…SGSS). The interval 72 to 251 (PNGNSGSNSW…RHARKQKRER (180 aa)) is interaction with HDAC1. The region spanning 97–183 (GGMRVGPQYQ…KSLADLPNFT (87 aa)) is the ELM2 domain. Lysine 116 is covalently cross-linked (Glycyl lysine isopeptide (Lys-Gly) (interchain with G-Cter in SUMO2)). Phosphoserine is present on serine 121. Residues 184–235 (PFPDEWTVEDKVLFEQAFSFHGKTFHRIQQMLPDKSIASLVKFYYSWKKTRT) enclose the SANT 1 domain. Residues 238–265 (SVMDRHARKQKREREESEDELEETNGSN) are a coiled coil. Residues 238–308 (SVMDRHARKQ…AKNRAKRKPP (71 aa)) are disordered. The residue at position 254 (serine 254) is a Phosphoserine. Basic and acidic residues predominate over residues 272-282 (DPNKESKKEVP). The tract at residues 290–378 (VKKEKHSTQA…LPEVIQKCNA (89 aa)) is interaction with KDM1A. Lysine 291 is covalently cross-linked (Glycyl lysine isopeptide (Lys-Gly) (interchain with G-Cter in SUMO2)). Residues 328 to 363 (ATTVLRQLDMELVSIKRQIQNIKQTNSALKEKLDGG) are a coiled coil. An SANT 2 domain is found at 375–426 (KCNARWTTEEQLLAVQAIRKYGRDFQAISDVIGNKSVVQVKNFFVNYRRRFN). Residues 436–466 (AEHGKDETNGPANQKPVKSPESSIKIPEEED) form a disordered region. Residue serine 454 is modified to Phosphoserine. A Glycyl lysine isopeptide (Lys-Gly) (interchain with G-Cter in SUMO2) cross-link involves residue lysine 460.

It belongs to the CoREST family. As to quaternary structure, component of a BHC histone deacetylase complex that contains HDAC1, HDAC2, HMG20B/BRAF35, KDM1A, RCOR1/CoREST and PHF21A/BHC80. The BHC complex may also contain ZMYM2, ZNF217, ZMYM3, GSE1 and GTF2I. Interacts with REST. Interacts with the SMARCE1/BAF57, suggesting that the BHC complex may recruit the ATP-dependent chromatin-remodeling SWI-SNF complex. Interacts directly with GFI1 and GFI1B in a RCOR/GFI/KDM1A/HDAC complex. Interacts with INMS1. Interacts with SOX2. As to expression, expressed in the external germinal layer (EGL) and internal granular layer (IGL) of the cerebellum and in Purkinje cells (at protein level).

The protein localises to the nucleus. In terms of biological role, essential component of the BHC complex, a corepressor complex that represses transcription of neuron-specific genes in non-neuronal cells. The BHC complex is recruited at RE1/NRSE sites by REST and acts by deacetylating and demethylating specific sites on histones, thereby acting as a chromatin modifier. In the BHC complex, it serves as a molecular beacon for the recruitment of molecular machinery, including MeCP2 and SUV39H1, that imposes silencing across a chromosomal interval. Plays a central role in demethylation of Lys-4 of histone H3 by promoting demethylase activity of KDM1A on core histones and nucleosomal substrates. It also protects KDM1A from the proteasome. Component of a RCOR/GFI/KDM1A/HDAC complex that suppresses, via histone deacetylase (HDAC) recruitment, a number of genes implicated in multilineage blood cell development and controls hematopoietic differentiation. This is REST corepressor 1 (Rcor1) from Mus musculus (Mouse).